A 274-amino-acid chain; its full sequence is Penicillin-insensitive murein endopeptidase (274 aa).

The N-terminal stretch at 1–19 is a signal peptide; it reads MKKTAIALLAWFVSSASLA. Cystine bridges form between Cys44–Cys265, Cys187–Cys235, and Cys216–Cys223. His110, His113, Asp120, Asp147, His150, and His211 together coordinate Zn(2+). The disordered stretch occupies residues 225-274; the sequence is DQPLPPPGDGCGAELQSWFEPPKPGTTKPEKKTPPPLPPSCQALLDEHVL.

The protein belongs to the peptidase M74 family. As to quaternary structure, dimer. Zn(2+) serves as cofactor.

It localises to the periplasm. Murein endopeptidase that cleaves the D-alanyl-meso-2,6-diamino-pimelyl amide bond that connects peptidoglycan strands. Likely plays a role in the removal of murein from the sacculus. The chain is Penicillin-insensitive murein endopeptidase from Salmonella choleraesuis (strain SC-B67).